A 729-amino-acid polypeptide reads, in one-letter code: Monosaccharide-sensing protein 2 (729 aa).

Helical transmembrane passes span 1–21, 47–67, 81–101, 104–124, 139–159, and 165–185; these read MSGAVLVAIAAAVGNLLQGWD, LIVAMSLIGATLITTCSGGVA, ILYFVGSLVMLWSPNVYVLLL, LLDGFGVGLVVTLVPIYISET, FTGSGGMFLSYCMVFGMSLMP, and LMLGVLFIPSLVFFFLTVFFL. The segment covering 347–363 has biased composition (acidic residues); it reads VGEGEDYPSDHGDDSED. Disordered regions lie at residues 347 to 367 and 423 to 442; these read VGEGEDYPSDHGDDSEDDLHS and EREDESGQKEEGFPGSRRGS. The span at 423–434 shows a compositional bias: basic and acidic residues; sequence EREDESGQKEEG. 2 positions are modified to phosphoserine: S438 and G448. A run of 6 helical transmembrane segments spans residues 507 to 527, 553 to 573, 585 to 605, 610 to 630, 650 to 670, and 679 to 699; these read ALVVGVGLQILQQFSGINGVL, ASLLISALTTFVMLPAIAVAM, LLTTIPILIASLLVLVISNLV, IVHAVLSTVSVVLYFCFFVMG, ICIAICALTFWICDIIVTYSL, and LAGVFGMYAIVCCISWVFVFI.

Belongs to the major facilitator superfamily. Sugar transporter (TC 2.A.1.1) family. As to expression, mostly expressed in roots and stems, and, to a lower extent, in juvenile and adult leaves, and in flower tissues.

It localises to the vacuole membrane. It carries out the reaction D-glucose(out) + H(+)(in) = D-glucose(in) + H(+)(out). The enzyme catalyses sucrose(out) + H(+)(in) = sucrose(in) + H(+)(out). Sugar proton-coupled antiporter which contributes to vacuolar sugar import (e.g. monosaccharides including glucose, sucrose and fructose), particularly during stress responses (e.g. in response to cold). This is Monosaccharide-sensing protein 2 from Arabidopsis thaliana (Mouse-ear cress).